Here is a 414-residue protein sequence, read N- to C-terminus: MSYLETTDPEIAAIIDKETNRQINGLELIASENVVSRAVLEASGSIMTNKYAEGYPGKRYYGGCEFHDMAENLARDRVCSLFGAEHANVQPHSGSQANMAVYFTVLKPSDKILSMNLSQGGHLSHGSPVNFSGIIYESHQYGVDLKTERMDYGTIAEMARTIKPKIIVCGASAYPREIDFKAFAEISEEVGAYCVADIAHIAGLCATGIHPSPVGLTTFTTSTTHKTLRGPRGGFILCDKEFAAPIDKAVFPGMQGGPLMHIIAAKAVCFKEASTKEFKKYSEQVVKNARTMAETLSANGVRLVSGGTDNHLCLLDLTNFGITGLEAEQALGNAGITVNKNTIPNETKSPFVTSGLRVGTPAVTSRGMKESEMKQIGEWIAAIIRDSKNTRLQETIREEVKSLASQYPLYPDLT.

(6S)-5,6,7,8-tetrahydrofolate-binding positions include leucine 117 and 121-123; that span reads GHL. N6-(pyridoxal phosphate)lysine is present on lysine 226. Residue 349-351 coordinates (6S)-5,6,7,8-tetrahydrofolate; it reads SPF.

This sequence belongs to the SHMT family. In terms of assembly, homodimer. The cofactor is pyridoxal 5'-phosphate.

The protein resides in the cytoplasm. The enzyme catalyses (6R)-5,10-methylene-5,6,7,8-tetrahydrofolate + glycine + H2O = (6S)-5,6,7,8-tetrahydrofolate + L-serine. It participates in one-carbon metabolism; tetrahydrofolate interconversion. It functions in the pathway amino-acid biosynthesis; glycine biosynthesis; glycine from L-serine: step 1/1. Its function is as follows. Catalyzes the reversible interconversion of serine and glycine with tetrahydrofolate (THF) serving as the one-carbon carrier. Also exhibits THF-independent aldolase activity toward beta-hydroxyamino acids, producing glycine and aldehydes, via a retro-aldol mechanism. This Methanospirillum hungatei JF-1 (strain ATCC 27890 / DSM 864 / NBRC 100397 / JF-1) protein is Serine hydroxymethyltransferase.